Reading from the N-terminus, the 101-residue chain is UPF0060 membrane protein ACIAD1364 (101 aa).

3 consecutive transmembrane segments (helical) span residues 24–44 (WLWLPAIISLAVFVWLLTLHP), 50–70 (IYAAYGGIYIFTALMWLRFID), and 79–99 (IWGGTVVLLGAALIILQPQGL).

The protein belongs to the UPF0060 family.

The protein localises to the cell inner membrane. This Acinetobacter baylyi (strain ATCC 33305 / BD413 / ADP1) protein is UPF0060 membrane protein ACIAD1364.